We begin with the raw amino-acid sequence, 933 residues long: MSGARRPGTSKRKRNWHIEHPSFREERSQQLRRGNFKTVEAADSLSKAWLKCGEGFQDTSEILSLASEKTGITEKHLELSPKPKTETTSKNASELPNIIWSSSESDFSDEDKTLPALQRDGRHGPRADRLGDRTISCPEDEDIEDELQVIDWEVNSDKEDPGGPSECEDDKGTLDISDCDSCASLTSDDRLCEPSEPISTEILEYSSDSEKEEDPEHSLFIDSESPHKYQADFKSDARWCLVSQTDSEANSAEPTLTPQKYTVKFPKTPEYSVTKKKLLRGGLAERLQELQNRKRSAISLWRHRCVSYQMTPLGRKSGVLTVKILELHEECSMQVAVCEQLAGPPITSPPGGLAPRPGAYLKVLFTRETADHLMGHPQDIIYIFPPWQKLLIPNGSCSIILNTYFCQKAIAKETVREDLYSPDISLSRRNITLAQTFRIKDITDNSSINQTTYDSLATPGTGWTHGHEKAEQHLIVAAPLRNSLLDIVESQRAGLWSGVRVQVVVQRVYSLLSRDGARSQQGHTVGHADASGAWSCLLVQDACGMFGEVFLNSTLWKSRQLEGKSCSMSGVKVLQKATRGRTPGLFSLIDSLWPPVISLTEPSCGQPSGETKTYLPPPIFCYIFSAHPTLGQIDAIEDHISKLYQPPVVRCLKEILQTNECSTRCSFYARVIYQKPQLKNLLAQKEIWLLVTDITLQTQDERDHSLPKTLPVYIAPSCVLGPEVVEELALLVSYNLLFRDAFKDNGQIVCIERTVILPQKPLLCVPSASCDLPSPVTLDELSALTPVNSICSVQGTVVDVDESTAFSWPVCDRCGNGRLEQKPEDGGTFSCGDCSQLVLSPLQERHLHVFLDCPTRPESTVKVKLLESSISLLLMSAASEDGSYEVESVLGKEMGPLLCFVQSITTQQSSCVVTLEEIELLSTEGATAAQPPP.

Disordered stretches follow at residues 1–34 (MSGA…LRRG), 67–174 (SEKT…KGTL), and 205–224 (YSSD…IDSE). 3 stretches are compositionally biased toward basic and acidic residues: residues 16–29 (WHIE…ERSQ), 71–87 (GITE…KTET), and 119–132 (RDGR…RLGD). A compositionally biased stretch (acidic residues) spans 138-148 (PEDEDIEDELQ). The segment at 175–469 (DISDCDSCAS…GTGWTHGHEK (295 aa)) is necessary for interaction with RAD51. A compositionally biased stretch (basic and acidic residues) spans 214–224 (DPEHSLFIDSE).

In terms of assembly, found in a complex, at least composed of BLM, RAD51 and SPIDR; the complex formation is mediated by SPIDR. Interacts (via C-terminal region) with BLM; the interaction is direct. Interacts with RAD51; the interaction is direct. Interacts (via the C-terminal region) with FIGNL1 (via N-terminal one-half region); the interaction is direct.

Its subcellular location is the nucleus. Plays a role in DNA double-strand break (DBS) repair via homologous recombination (HR). Serves as a scaffolding protein that helps to promote the recruitment of DNA-processing enzymes like the helicase BLM and recombinase RAD51 to site of DNA damage, and hence contributes to maintain genomic integrity. This Mus musculus (Mouse) protein is DNA repair-scaffolding protein (Spidr).